Consider the following 416-residue polypeptide: MANISEISGDSNDGGDPNKKPEEQVLRRSRRIATRNENQNKKPKEEEEKDNRSVSFPIPNELTEACVALIRKCDYPSLSSVSSYFFNLIASSELYETRSRLGLSETFLYAAIRFPDTNPPNWYILHRNKVSSLRLSKLESLPPVPYGCSVVTIGQEMYVIGGLLDVRRLQLMTLIDCRTHKCRSLPKMKRGRYHAAAGVFDGKIYVIGGFRMRKPDAEWIEVFDLKKQIWESLPGPYPKTSMDSQFFAHAVMEDKLYILGSRCLIYEPKRNGEWDATVNANPIWNLWKVPCTMQCVIDDMLYTIDPQCTLGHPIVVYNPKDKTWRPVKGESLRTLPSYFVSDGSEMANFGGKLVILGSNGSCYDTGDCIGEKGIWCVMIELEKREGGEIWGKVESLDCVLGDINFLSVWLCQTLTL.

The segment covering 1–11 (MANISEISGDS) has biased composition (polar residues). The segment at 1–55 (MANISEISGDSNDGGDPNKKPEEQVLRRSRRIATRNENQNKKPKEEEEKDNRSVS) is disordered. Composition is skewed to basic and acidic residues over residues 16-26 (DPNKKPEEQVL) and 38-52 (NQNK…KDNR). Kelch repeat units follow at residues 156-202 (EMYV…VFDG), 203-250 (KIYV…FAHA), 255-293 (KLYI…PCTM), and 294-344 (QCVI…SDGS).

The chain is Kelch repeat-containing protein At1g19460 from Arabidopsis thaliana (Mouse-ear cress).